Reading from the N-terminus, the 512-residue chain is Putative ribose/galactose/methyl galactoside import ATP-binding protein 1 (512 aa).

ABC transporter domains are found at residues 14-251 (IALT…VGRQ) and 262-507 (TSAN…TQRE). Position 46–53 (46–53 (GENGAGKS)) interacts with ATP.

This sequence belongs to the ABC transporter superfamily. Carbohydrate importer 2 (CUT2) (TC 3.A.1.2) family.

The protein resides in the cell inner membrane. It carries out the reaction D-ribose(out) + ATP + H2O = D-ribose(in) + ADP + phosphate + H(+). The catalysed reaction is D-galactose(out) + ATP + H2O = D-galactose(in) + ADP + phosphate + H(+). Functionally, part of an ABC transporter complex involved in carbohydrate import. Could be involved in ribose, galactose and/or methyl galactoside import. Responsible for energy coupling to the transport system. In Burkholderia lata (strain ATCC 17760 / DSM 23089 / LMG 22485 / NCIMB 9086 / R18194 / 383), this protein is Putative ribose/galactose/methyl galactoside import ATP-binding protein 1.